We begin with the raw amino-acid sequence, 93 residues long: MTRSSKKEPFVEEKLMRRILEMNEKNEKRMIKTWSRASVIYPEMVGHTIAVHDGRKHVPVYITESMVGHRLGEFAPTRTFRSHKKDDRTARRR.

Belongs to the universal ribosomal protein uS19 family.

Functionally, protein S19 forms a complex with S13 that binds strongly to the 16S ribosomal RNA. The chain is Small ribosomal subunit protein uS19 from Rubrobacter xylanophilus (strain DSM 9941 / JCM 11954 / NBRC 16129 / PRD-1).